A 184-amino-acid polypeptide reads, in one-letter code: Uroplakin-2 (184 aa).

The signal sequence occupies residues 1–25 (MAPLLPIRTLPLILILLALLSPGAA). The propeptide occupies 26–84 (DFNISSLSGLLSPALTESLLVALPPCHLTGGNATLMVRRANDSKVVTSSFVVPPCRGRR). Asparagine 28, asparagine 57, and asparagine 66 each carry an N-linked (GlcNAc...) asparagine glycan. At 85-155 (ELVSVVDSGA…IGLGMARTGG (71 aa)) the chain is on the lumenal side. The helical transmembrane segment at 156–176 (MVVITVLLSVAMFLLVLGFII) threads the bilayer. Topologically, residues 177-184 (ALALGSRK) are cytoplasmic.

Belongs to the uroplakin-2 family. In terms of assembly, interacts with uroplakin-1a (UPK1A). In terms of tissue distribution, expressed in ureter.

It is found in the cell membrane. In terms of biological role, component of the asymmetric unit membrane (AUM); a highly specialized biomembrane elaborated by terminally differentiated urothelial cells. May play an important role in regulating the assembly of the AUM. This chain is Uroplakin-2 (UPK2), found in Homo sapiens (Human).